Consider the following 195-residue polypeptide: Peptidyl-tRNA hydrolase (195 aa).

Tyr17 contacts tRNA. His22 acts as the Proton acceptor in catalysis. TRNA contacts are provided by Phe68, Asn70, and Asn116.

The protein belongs to the PTH family. As to quaternary structure, monomer.

The protein localises to the cytoplasm. It carries out the reaction an N-acyl-L-alpha-aminoacyl-tRNA + H2O = an N-acyl-L-amino acid + a tRNA + H(+). Its function is as follows. Hydrolyzes ribosome-free peptidyl-tRNAs (with 1 or more amino acids incorporated), which drop off the ribosome during protein synthesis, or as a result of ribosome stalling. Catalyzes the release of premature peptidyl moieties from peptidyl-tRNA molecules trapped in stalled 50S ribosomal subunits, and thus maintains levels of free tRNAs and 50S ribosomes. The sequence is that of Peptidyl-tRNA hydrolase from Pectobacterium carotovorum subsp. carotovorum (strain PC1).